Reading from the N-terminus, the 220-residue chain is Ribose-5-phosphate isomerase A (220 aa).

Substrate-binding positions include 28-31 (TGST), 81-84 (DGAD), and 94-97 (KGGG). Glu-103 serves as the catalytic Proton acceptor. Position 121 (Lys-121) interacts with substrate.

This sequence belongs to the ribose 5-phosphate isomerase family. In terms of assembly, homodimer.

The enzyme catalyses aldehydo-D-ribose 5-phosphate = D-ribulose 5-phosphate. It participates in carbohydrate degradation; pentose phosphate pathway; D-ribose 5-phosphate from D-ribulose 5-phosphate (non-oxidative stage): step 1/1. Functionally, catalyzes the reversible conversion of ribose-5-phosphate to ribulose 5-phosphate. The chain is Ribose-5-phosphate isomerase A from Aromatoleum aromaticum (strain DSM 19018 / LMG 30748 / EbN1) (Azoarcus sp. (strain EbN1)).